Reading from the N-terminus, the 249-residue chain is tRNA pseudouridine synthase A (249 aa).

Asp-53 functions as the Nucleophile in the catalytic mechanism. Position 111 (Tyr-111) interacts with substrate.

This sequence belongs to the tRNA pseudouridine synthase TruA family. In terms of assembly, homodimer.

It catalyses the reaction uridine(38/39/40) in tRNA = pseudouridine(38/39/40) in tRNA. Formation of pseudouridine at positions 38, 39 and 40 in the anticodon stem and loop of transfer RNAs. The sequence is that of tRNA pseudouridine synthase A from Streptococcus pneumoniae serotype 2 (strain D39 / NCTC 7466).